The sequence spans 269 residues: uncharacterized protein (269 aa).

A DNA-binding region (ompR/PhoB-type) is located at residues 3–105; the sequence is WIINDNIEFW…VPRRGFKIHN (103 aa).

To V.cholerae cholera toxin transcriptional activator (ToxR).

This is an uncharacterized protein from Escherichia coli (strain K12).